Reading from the N-terminus, the 391-residue chain is Aspartate carbamoyltransferase 3, chloroplastic (391 aa).

A chloroplast-targeting transit peptide spans 1-69 (MTASSSLFSC…SKCDKMIKTR (69 aa)). The carbamoyl phosphate site is built by Arg137 and Thr138. Positions 137 and 138 each coordinate UMP. Lys167 contributes to the L-aspartate binding site. The carbamoyl phosphate site is built by Arg188, His216, and Gln219. Arg188 and His216 together coordinate UMP. Residues Arg249 and Arg311 each contribute to the UMP site. Positions 249 and 311 each coordinate L-aspartate. Carbamoyl phosphate is bound by residues Leu351 and Pro352.

Belongs to the aspartate/ornithine carbamoyltransferase superfamily. ATCase family. As to quaternary structure, homotrimer.

It is found in the plastid. The protein localises to the chloroplast. The enzyme catalyses carbamoyl phosphate + L-aspartate = N-carbamoyl-L-aspartate + phosphate + H(+). It functions in the pathway pyrimidine metabolism; UMP biosynthesis via de novo pathway; (S)-dihydroorotate from bicarbonate: step 2/3. Feedback inhibited by UMP. Catalyzes the condensation of carbamoyl phosphate and aspartate to form carbamoyl aspartate and inorganic phosphate, the committed step in the de novo pyrimidine nucleotide biosynthesis pathway. The protein is Aspartate carbamoyltransferase 3, chloroplastic (PYRB3) of Pisum sativum (Garden pea).